The primary structure comprises 73 residues: MLLTISDFLFLSLTFSRYARMRDSRPWSDRKNNYSGPQFTYPPEKAPPEKLIKWNNEGSPIFEMPAEGGHIEP.

The N-terminal stretch at methionine 1–threonine 14 is a signal peptide. The disordered stretch occupies residues arginine 25 to proline 48.

The protein resides in the secreted. In terms of biological role, displays antimicrobial activity against the Gram-positive bacterium S.aureus ATCC 2592, the Gram-negative bacteria E.coli ATCC 25922 and P.aeruginosa ATCC 27853, and the fungus C.albicans ATCC 2002. Displays stronger activity against P.aeruginosa and S.aureus than E.coli. Displays very weak hemolytic activity. This Metaphire guillelmi (Earthworm) protein is Antimicrobial peptide lumbricin-PG.